Here is a 215-residue protein sequence, read N- to C-terminus: UPF0502 protein YceH (215 aa).

The protein belongs to the UPF0502 family.

The protein is UPF0502 protein YceH of Salmonella arizonae (strain ATCC BAA-731 / CDC346-86 / RSK2980).